The chain runs to 254 residues: Ciliary microtubule associated protein 1A (254 aa).

STPGR repeat units follow at residues 180 to 205 (PGPA…MAAR) and 216 to 241 (PGPG…FGIK). The interval 207–226 (EPPGDKTLKPGPGAHSPEKV) is disordered.

It belongs to the CIMAP family. In terms of assembly, microtubule inner protein component of sperm flagellar doublet microtubules.

The protein localises to the cytoplasm. It is found in the cytoskeleton. It localises to the flagellum axoneme. Its function is as follows. Outer dense fibers are filamentous structures located on the outside of the axoneme in the midpiece and principal piece of the mammalian sperm tail. May help to maintain the passive elastic structures and elastic recoil of the sperm tail. This chain is Ciliary microtubule associated protein 1A (CIMAP1A), found in Bos taurus (Bovine).